A 1030-amino-acid polypeptide reads, in one-letter code: Leucine-rich repeat and coiled-coil domain-containing protein 1 (1030 aa).

6 LRR repeats span residues 7 to 28 (RNRELSLMDKQISSLLEICLNS), 29 to 50 (NLYSINLHCNQISKIEGLRHLC), 51 to 72 (YLQHLDLSSNLITKIEGLDSLA), 73 to 94 (SLQSLNLSCNKLTRVEGLEKLF), 95 to 116 (NLKKLNLSYNSIQDLTGLIPLH), and 121 to 142 (KLSHLYLHSNCINSIDEVLQST). In terms of domain architecture, LRRCT spans 160–200 (NPVCHALGYREIILENLPQLNSLDGLDRSGDPVTAHEVDSM). Residues 298 to 401 (KSEQTKLKAK…GQILGKPHAI (104 aa)) are disordered. Residues 300–311 (EQTKLKAKRDTD) are compositionally biased toward basic and acidic residues. Composition is skewed to polar residues over residues 338 to 368 (KTSQTSKQQANQQLKGRTSYSELKQNVSRKQ) and 378 to 393 (ETSLSSGRTDTDSTGQ). Positions 432-645 (RERRWKAEQV…DLEDEFRAAL (214 aa)) form a coiled coil.

The protein belongs to the LRRCC1 family.

The protein localises to the cytoplasm. It is found in the cytoskeleton. It localises to the microtubule organizing center. The protein resides in the centrosome. Its subcellular location is the centriole. Functionally, required for the organization of the mitotic spindle. Maintains the structural integrity of centrosomes during mitosis. The chain is Leucine-rich repeat and coiled-coil domain-containing protein 1 (lrrcc1) from Xenopus laevis (African clawed frog).